A 278-amino-acid chain; its full sequence is Cyclin-C (278 aa).

The 99-residue stretch at 41-139 (NVIQALGEHL…ILECEFYLLE (99 aa)) folds into the Cyclin N-terminal domain. Residues 247–278 (TILSKMPKPKPPPNSEGEQGPNGSQNSSYSQS) are disordered. Polar residues predominate over residues 267–278 (PNGSQNSSYSQS). The residue at position 270 (Ser-270) is a Phosphoserine.

This sequence belongs to the cyclin family. Cyclin C subfamily. As to quaternary structure, component of the Mediator complex, which is composed of MED1, MED4, MED6, MED7, MED8, MED9, MED10, MED11, MED12, MED13, MED13L, MED14, MED15, MED16, MED17, MED18, MED19, MED20, MED21, MED22, MED23, MED24, MED25, MED26, MED27, MED29, MED30, MED31, CCNC, CDK8 and CDC2L6/CDK11. The MED12, MED13, CCNC and CDK8 subunits form a distinct module termed the CDK8 module. Mediator containing the CDK8 module is less active than Mediator lacking this module in supporting transcriptional activation. Individual preparations of the Mediator complex lacking one or more distinct subunits have been variously termed ARC, CRSP, DRIP, PC2, SMCC and TRAP. The cylin/CDK pair formed by CCNC/CDK8 also associates with the large subunit of RNA polymerase II.

Its subcellular location is the nucleus. In terms of biological role, component of the Mediator complex, a coactivator involved in regulated gene transcription of nearly all RNA polymerase II-dependent genes. Mediator functions as a bridge to convey information from gene-specific regulatory proteins to the basal RNA polymerase II transcription machinery. Mediator is recruited to promoters by direct interactions with regulatory proteins and serves as a scaffold for the assembly of a functional preinitiation complex with RNA polymerase II and the general transcription factors. Binds to and activates cyclin-dependent kinase CDK8 that phosphorylates the CTD (C-terminal domain) of the large subunit of RNA polymerase II (RNAp II), which may inhibit the formation of a transcription initiation complex. In Rattus norvegicus (Rat), this protein is Cyclin-C (Ccnc).